Consider the following 467-residue polypeptide: F-box only protein 6 (467 aa).

Residues 114-163 enclose the F-box domain; it reads QEIWQEFPQDLFEDVVSRLPMATFFQFRAVCRKWNALIDSDSFSRCFTEL. 3 Kelch repeats span residues 163–211, 252–305, and 406–456; these read LPQT…MASA, GMTL…NFKS, and CLGN…IACG.

This is F-box only protein 6 (FBX6) from Arabidopsis thaliana (Mouse-ear cress).